The chain runs to 350 residues: MSASPTAGQAGLSYRDAGVDIDAGDALVDRIKPFAKRTMREGVMAGIGGFGALFELSKKYQEPVLVSGTDGVGTKLKLAFQLNRHDTVGQDLVAMSVNDILVQGAEPLFFLDYFACGKLDVDTAATVIQGIARGCELAGCALIGGETAEMPSMYPDGEYDLAGFAVGAVEKKKIIDGSTITPGDVVLGLASSGAHSNGYSLVRKIIEVAKPDLDADFHGQRLQDAIMAPTRIYVKPLLSLIETLPVKGMAHITGGGLTENVPRVLAQDVTAVLHRDAWTLPPLFQWLQAQGRVADDEMHRVFNCGIGMVVIVAKEDAERAIRHLQAAGEAVWQIGEIRERAEGEAQTIVI.

It belongs to the AIR synthase family.

The protein localises to the cytoplasm. The enzyme catalyses 2-formamido-N(1)-(5-O-phospho-beta-D-ribosyl)acetamidine + ATP = 5-amino-1-(5-phospho-beta-D-ribosyl)imidazole + ADP + phosphate + H(+). It participates in purine metabolism; IMP biosynthesis via de novo pathway; 5-amino-1-(5-phospho-D-ribosyl)imidazole from N(2)-formyl-N(1)-(5-phospho-D-ribosyl)glycinamide: step 2/2. The sequence is that of Phosphoribosylformylglycinamidine cyclo-ligase from Cupriavidus taiwanensis (strain DSM 17343 / BCRC 17206 / CCUG 44338 / CIP 107171 / LMG 19424 / R1) (Ralstonia taiwanensis (strain LMG 19424)).